We begin with the raw amino-acid sequence, 479 residues long: MANFTPVNGSSANQSVRLVTTAHNHLETVEMVFIATVTGSLSLVTVVGNILVMLSIKVNRQLQTVNNYFLFSLACADLIIGAFSMNLYTLYIIKGYWPLGAVVCDLWLALDYVVSNASVMNLLIISFDRYFCVTKPLTYPARRTTKMAGLMIAAAWVLSFVLWAPAILFWQFVVGKRTVPDNQCFIQFLSNPAVTFGTAIAAFYLPVVIMTVLYIHISLASRSRVHKHRPEGPKEKKAKTLAFLKSPLMKPSIKKPPPGGASREELRNGKLEEAPPPALPPPPRPVADKDTSNESSSGSATQNTKERPPTELSTTEAATTPALPAPTLQPRTLNPASKWSKIQIVTKQTGSECVTAIEIVPATPAGMRPAANVARKFASIARNQVRKKRQMAARERKVTRTIFAILLAFILTWTPYNVMVLVNTFCQSCIPERVWSIGYWLCYVNSTINPACYALCNATFKKTFRHLLLCQYRNIGTAR.

The Extracellular segment spans residues 1–30 (MANFTPVNGSSANQSVRLVTTAHNHLETVE). Residues Asn-8 and Asn-13 are each glycosylated (N-linked (GlcNAc...) asparagine). Residues 31–53 (MVFIATVTGSLSLVTVVGNILVM) traverse the membrane as a helical segment. Residues 54 to 67 (LSIKVNRQLQTVNN) are Cytoplasmic-facing. A helical transmembrane segment spans residues 68-88 (YFLFSLACADLIIGAFSMNLY). Topologically, residues 89–105 (TLYIIKGYWPLGAVVCD) are extracellular. Cys-104 and Cys-184 are disulfide-bonded. A helical transmembrane segment spans residues 106 to 127 (LWLALDYVVSNASVMNLLIISF). The Cytoplasmic portion of the chain corresponds to 128-147 (DRYFCVTKPLTYPARRTTKM). A helical transmembrane segment spans residues 148–170 (AGLMIAAAWVLSFVLWAPAILFW). The Extracellular segment spans residues 171–192 (QFVVGKRTVPDNQCFIQFLSNP). Residues 193 to 215 (AVTFGTAIAAFYLPVVIMTVLYI) traverse the membrane as a helical segment. The Cytoplasmic segment spans residues 216–401 (HISLASRSRV…AARERKVTRT (186 aa)). The tract at residues 271–334 (LEEAPPPALP…APTLQPRTLN (64 aa)) is disordered. Residues 274–285 (APPPALPPPPRP) show a composition bias toward pro residues. A compositionally biased stretch (polar residues) spans 293–303 (NESSSGSATQN). Residues 310-333 (TELSTTEAATTPALPAPTLQPRTL) are compositionally biased toward low complexity. The helical transmembrane segment at 402 to 422 (IFAILLAFILTWTPYNVMVLV) threads the bilayer. Residues 423–436 (NTFCQSCIPERVWS) lie on the Extracellular side of the membrane. A helical membrane pass occupies residues 437-456 (IGYWLCYVNSTINPACYALC). Over 457–479 (NATFKKTFRHLLLCQYRNIGTAR) the chain is Cytoplasmic. Residues Thr-459, Thr-463, and Thr-477 each carry the phosphothreonine modification.

Belongs to the G-protein coupled receptor 1 family. Muscarinic acetylcholine receptor subfamily. CHRM4 sub-subfamily.

It localises to the cell membrane. The protein localises to the postsynaptic cell membrane. Its function is as follows. The muscarinic acetylcholine receptor mediates various cellular responses, including inhibition of adenylate cyclase, breakdown of phosphoinositides and modulation of potassium channels through the action of G proteins. Primary transducing effect is inhibition of adenylate cyclase. The polypeptide is Muscarinic acetylcholine receptor M4 (Chrm4) (Mus musculus (Mouse)).